Here is a 205-residue protein sequence, read N- to C-terminus: Protein-L-isoaspartate O-methyltransferase (205 aa).

Residue Ser-56 is part of the active site.

The protein belongs to the methyltransferase superfamily. L-isoaspartyl/D-aspartyl protein methyltransferase family.

It is found in the cytoplasm. It catalyses the reaction [protein]-L-isoaspartate + S-adenosyl-L-methionine = [protein]-L-isoaspartate alpha-methyl ester + S-adenosyl-L-homocysteine. In terms of biological role, catalyzes the methyl esterification of L-isoaspartyl residues in peptides and proteins that result from spontaneous decomposition of normal L-aspartyl and L-asparaginyl residues. It plays a role in the repair and/or degradation of damaged proteins. The polypeptide is Protein-L-isoaspartate O-methyltransferase (Pyrobaculum aerophilum (strain ATCC 51768 / DSM 7523 / JCM 9630 / CIP 104966 / NBRC 100827 / IM2)).